The following is a 717-amino-acid chain: Asp/Glu-specific dipeptidyl-peptidase (717 aa).

The signal sequence occupies residues 1 to 21 (MNKRFFPTLLLAFVCSTLAYA). Active-site charge relay system residues include His85, Asp226, and Ser652.

It belongs to the peptidase S46 family.

The protein localises to the secreted. It localises to the cell surface. With respect to regulation, enzyme activity is completely blocked by diisopropyl-fluorophosphates, moderately by phenylmethylsulfonyl fluoride (PMSF) and 4-(2-methyl)benzenesulfonyl fluoride, and slightly by pepstatin in vitro. Catalyzes the removal of dipeptides from the N-terminus of oligopeptides. Shows a strict specificity for acidic residues (Asp or Glu) in the P1 position, and has a hydrophobic residue preference at the P2 position. Is likely involved in amino acid metabolism and bacterial growth/survival of asaccharolytic P.endodontalis, that utilizes amino acids from extracellular proteinaceous nutrients as energy and carbon sources. In Porphyromonas endodontalis (strain ATCC 35406 / DSM 24491 / JCM 8526 / CCUG 16442 / BCRC 14492 / NCTC 13058 / HG 370) (Bacteroides endodontalis), this protein is Asp/Glu-specific dipeptidyl-peptidase (dpp11).